A 932-amino-acid chain; its full sequence is Ribosome biogenesis protein ERB1 (932 aa).

Over residues 1-18 (MVRPSSSSSASASAARSG) the composition is skewed to low complexity. Residues 1-229 (MVRPSSSSSA…RSQAAQAFDL (229 aa)) form a disordered region. The segment covering 27–36 (PTATNPTTRA) has biased composition (polar residues). 2 stretches are compositionally biased toward acidic residues: residues 57 to 119 (VSDD…EVDS) and 150 to 172 (DNSD…DEDE). The segment covering 175–184 (SAFAARSDAS) has biased composition (low complexity). WD repeat units lie at residues 555-594 (PDGG…CTAS) and 604-644 (AERS…NYAK). The tract at residues 679-698 (SMPSKPDARSPVAWTRPSEA) is disordered. WD repeat units lie at residues 762–800 (SKGS…LIKT), 803–842 (SGFK…RPYK), 846–885 (YHAR…DYGE), and 901–932 (KNGL…LWTT).

The protein belongs to the WD repeat BOP1/ERB1 family. As to quaternary structure, component of the NOP7 complex, composed of ERB1, NOP7 and YTM1. The complex is held together by ERB1, which interacts with NOP7 via its N-terminal domain and with YTM1 via a high-affinity interaction between the seven-bladed beta-propeller domains of the 2 proteins. The NOP7 complex associates with the 66S pre-ribosome.

It localises to the nucleus. The protein localises to the nucleolus. The protein resides in the nucleoplasm. In terms of biological role, component of the NOP7 complex, which is required for maturation of the 25S and 5.8S ribosomal RNAs and formation of the 60S ribosome. In Mycosarcoma maydis (Corn smut fungus), this protein is Ribosome biogenesis protein ERB1.